A 345-amino-acid polypeptide reads, in one-letter code: tRNA pseudouridine synthase B (345 aa).

Asp39 serves as the catalytic Nucleophile.

It belongs to the pseudouridine synthase TruB family. Type 1 subfamily.

The enzyme catalyses uridine(55) in tRNA = pseudouridine(55) in tRNA. In terms of biological role, responsible for synthesis of pseudouridine from uracil-55 in the psi GC loop of transfer RNAs. This chain is tRNA pseudouridine synthase B, found in Rickettsia peacockii (strain Rustic).